Reading from the N-terminus, the 547-residue chain is Phospholipase DDHD1 (547 aa).

The active site involves Ser-184. In terms of domain architecture, DDHD spans 258 to 533 (LKFKVENFFC…ALFLLTFMYK (276 aa)). Ser-370 is subject to Phosphoserine. The disordered stretch occupies residues 414–448 (RSSASQPSEPSKDSLEDDKKPSASPSTTTVATQTL). Residues 423–434 (PSKDSLEDDKKP) show a composition bias toward basic and acidic residues. Positions 435-448 (SASPSTTTVATQTL) are enriched in low complexity.

Belongs to the PA-PLA1 family. Forms homooligomers and, to a much smaller extent, heterooligomers with DDHD2. Interacts with SEC23A and SEC24C. Predominantly expressed in testis, in round and elongating spermatids, but not in spermatocytes (at protein level). Also expressed in the brain, and at lower levels in other tissues such as thymus and lung (at protein level).

The protein localises to the cytoplasm. It carries out the reaction a 1,2-diacyl-sn-glycero-3-phosphate + H2O = a 2-acyl-sn-glycerol 3-phosphate + a fatty acid + H(+). It catalyses the reaction a 1,2-diacyl-sn-glycero-3-phospho-(1D-myo-inositol) + H2O = a 2-acyl-sn-glycero-3-phospho-D-myo-inositol + a fatty acid + H(+). The catalysed reaction is 1-octadecanoyl-2-(5Z,8Z,11Z,14Z-eicosatetraenoyl)-sn-glycero-3-phospho-(1D-myo-inositol) + H2O = 2-(5Z,8Z,11Z,14Z-eicosatetraenoyl)-sn-glycero-3-phospho-(1D-myo-inositol) + octadecanoate + H(+). The enzyme catalyses a 1-acyl-2-(5Z,8Z,11Z,14Z-eicosatetraenoyl)-sn-glycero-3-phospho-(1D-myo-inositol) + H2O = 2-(5Z,8Z,11Z,14Z-eicosatetraenoyl)-sn-glycero-3-phospho-(1D-myo-inositol) + a fatty acid + H(+). It carries out the reaction 1,2-dihexadecanoyl-sn-glycero-3-phospho-(1D-myo-inositol) + H2O = 2-hexadecanoyl-sn-glycero-3-phospho-(1D-myo-inositol) + hexadecanoate + H(+). It catalyses the reaction a 1-acyl-2-(5Z,8Z,11Z,14Z)-eicosatetraenoyl-sn-glycero-3-phosphate + H2O = 2-(5Z,8Z,11Z,14Z-eicosatetraenoyl)-sn-glycero-3-phosphate + a fatty acid + H(+). The catalysed reaction is 1-(9Z-octadecenoyl)-2-(7Z,10Z,13Z,16Z,19Z-docosapentaenoyl)-sn-glycero-3-phospho-1D-myo-inositol + H2O = 2-(7Z,10Z,13Z,16Z,19Z-docosapentaenoyl)-sn-glycero-3-phospho-1D-myo-inositol + (9Z)-octadecenoate + H(+). The enzyme catalyses 1-(9Z-octadecenoyl)-2-(5Z,8Z,11Z,14Z-eicosatetraenoyl)-sn-glycero-3-phospho-1D-myo-inositol + H2O = 2-(5Z,8Z,11Z,14Z-eicosatetraenoyl)-sn-glycero-3-phospho-(1D-myo-inositol) + (9Z)-octadecenoate + H(+). It carries out the reaction 1,2-di-(9Z-octadecenoyl)-sn-glycero-3-phospho-1D-myo-inositol + H2O = 2-(9Z-octadecenoyl)-sn-glycero-3-phospho-1D-myo-inositol + (9Z)-octadecenoate + H(+). It catalyses the reaction 1-(9Z-octadecenoyl)-2-(8Z,11Z,14Z-eicosatrienoyl)-sn-glycero-3-phospho-1D-myo-inositol + H2O = 2-(8Z,11Z,14Z-eicosatrienoyl)-sn-glycero-3-phospho-1D-myo-inositol + (9Z)-octadecenoate + H(+). The catalysed reaction is 1,2-di-(9Z-octadecenoyl)-sn-glycero-3-phosphate + H2O = 2-(9Z-octadecenoyl)-sn-glycero-3-phosphate + (9Z)-octadecenoate + H(+). The enzyme catalyses 1-hexadecanoyl-2-(9Z-octadecenoyl)-sn-glycero-3-phosphate + H2O = 2-(9Z-octadecenoyl)-sn-glycero-3-phosphate + hexadecanoate + H(+). It carries out the reaction 1-hexadecanoyl-2-(9Z-octadecenoyl)-sn-glycero-3-phospho-L-serine + H2O = 2-(9Z-octadecenoyl)-sn-glycero-3-phospho-L-serine + hexadecanoate + H(+). It catalyses the reaction 1,2-di-(5Z,8Z,11Z,14Z)-eicosatetraenoyl-sn-glycero-3-phosphate + H2O = 2-(5Z,8Z,11Z,14Z-eicosatetraenoyl)-sn-glycero-3-phosphate + (5Z,8Z,11Z,14Z)-eicosatetraenoate + H(+). The catalysed reaction is 1-octadecanoyl-2-(5Z,8Z,11Z,14Z-eicosatetraenoyl)-sn-glycero-3-phosphate + H2O = 2-(5Z,8Z,11Z,14Z-eicosatetraenoyl)-sn-glycero-3-phosphate + octadecanoate + H(+). The enzyme catalyses a 1,2-diacyl-sn-glycero-3-phospho-L-serine + H2O = a 2-acyl-sn-glycero-3-phospho-L-serine + a fatty acid + H(+). It carries out the reaction a 1,2-diacyl-sn-glycero-3-phosphocholine + H2O = a 2-acyl-sn-glycero-3-phosphocholine + a fatty acid + H(+). It catalyses the reaction 1,2-di-(9Z-octadecenoyl)-sn-glycero-3-phosphocholine + H2O = (9Z-octadecenoyl)-sn-glycero-3-phosphocholine + (9Z)-octadecenoate + H(+). The catalysed reaction is a 1,2-diacyl-sn-glycero-3-phosphoethanolamine + H2O = a 2-acyl-sn-glycero-3-phosphoethanolamine + a fatty acid + H(+). The enzyme catalyses a 1,2-diacyl-sn-glycero-3-phospho-(1'-sn-glycerol) + H2O = 2-acyl-sn-glycero-3-phospho-(1'-sn-glycerol) + a fatty acid + H(+). It carries out the reaction 1-hexadecanoyl-2-(9Z-octadecenoyl)-sn-glycero-3-phospho-(1'-sn-glycerol) + H2O = 2-(9Z-octadecenoyl)-sn-glycero-3-phospho-(1'-sn-glycerol) + hexadecanoate + H(+). It catalyses the reaction 1-acyl-2-(5Z,8Z,11Z,14Z-eicosatetraenoyl)-sn-glycero-3-phosphocholine + H2O = 2-(5Z,8Z,11Z,14Z)-eicosatetraenoyl-sn-glycero-3-phosphocholine + a fatty acid + H(+). The catalysed reaction is 1-acyl-2-(5Z,8Z,11Z,14Z)-eicosatetraenoyl-sn-glycero-3-phosphoethanolamine + H2O = 2-(5Z,8Z,11Z,14Z)-eicosatetraenoyl-sn-glycero-3-phosphoethanolamine + a fatty acid + H(+). It functions in the pathway phospholipid metabolism; phosphatidylinositol metabolism. Functionally, phospholipase A1 (PLA1) that hydrolyzes ester bonds at the sn-1 position of glycerophospholipids producing a free fatty acid and a lysophospholipid. Prefers phosphatidate (1,2-diacyl-sn-glycero-3-phosphate, PA) as substrate in vitro, but can efficiently hydrolyze phosphatidylinositol (1,2-diacyl-sn-glycero-3-phospho-(1D-myo-inositol), PI), as well as a range of other glycerophospholipid substrates such as phosphatidylcholine (1,2-diacyl-sn-glycero-3-phosphocholine, PC), phosphatidylethanolamine (1,2-diacyl-sn-glycero-3-phosphoethanolamine, PE), phosphatidylserine (1,2-diacyl-sn-glycero-3-phospho-L-serine, PS) and phosphatidylglycerol (1,2-diacyl-sn-glycero-3-phospho-(1'-sn-glycerol), PG). Involved in the regulation of the endogenous content of polyunsaturated PI and PS lipids in the nervous system. Changes in these lipids extend to downstream metabolic products like PI phosphates PIP and PIP2, which play fundamental roles in cell biology. Regulates mitochondrial morphology. These dynamic changes may be due to PA hydrolysis at the mitochondrial surface. May play a regulatory role in spermatogenesis or sperm function. This chain is Phospholipase DDHD1, found in Mus musculus (Mouse).